The sequence spans 239 residues: Methylthioribulose-1-phosphate dehydratase (239 aa).

Cys-94 contacts substrate. His-112 and His-114 together coordinate Zn(2+). The active-site Proton donor/acceptor is the Glu-136. His-192 is a binding site for Zn(2+).

This sequence belongs to the aldolase class II family. MtnB subfamily. Zn(2+) is required as a cofactor.

It is found in the cytoplasm. It catalyses the reaction 5-(methylsulfanyl)-D-ribulose 1-phosphate = 5-methylsulfanyl-2,3-dioxopentyl phosphate + H2O. The protein operates within amino-acid biosynthesis; L-methionine biosynthesis via salvage pathway; L-methionine from S-methyl-5-thio-alpha-D-ribose 1-phosphate: step 2/6. In terms of biological role, catalyzes the dehydration of methylthioribulose-1-phosphate (MTRu-1-P) into 2,3-diketo-5-methylthiopentyl-1-phosphate (DK-MTP-1-P). Functions in the methionine salvage pathway. May play a role in apoptosis. The chain is Methylthioribulose-1-phosphate dehydratase from Xenopus laevis (African clawed frog).